The following is a 299-amino-acid chain: Protoheme IX farnesyltransferase (299 aa).

Helical transmembrane passes span 24–44 (VVAL…DQGM), 46–66 (WNAL…AAAI), 94–114 (VHAL…LAWG), 118–138 (LTAW…TLFL), 146–166 (IVLG…SVTG), 172–192 (ALLL…ALAV), 232–252 (LPFI…ALGV), and 278–298 (ITYL…PVTL).

Belongs to the UbiA prenyltransferase family. Protoheme IX farnesyltransferase subfamily.

The protein localises to the cell inner membrane. The catalysed reaction is heme b + (2E,6E)-farnesyl diphosphate + H2O = Fe(II)-heme o + diphosphate. It functions in the pathway porphyrin-containing compound metabolism; heme O biosynthesis; heme O from protoheme: step 1/1. In terms of biological role, converts heme B (protoheme IX) to heme O by substitution of the vinyl group on carbon 2 of heme B porphyrin ring with a hydroxyethyl farnesyl side group. The chain is Protoheme IX farnesyltransferase from Hahella chejuensis (strain KCTC 2396).